Here is a 191-residue protein sequence, read N- to C-terminus: Peptidyl-tRNA hydrolase (191 aa).

Tyrosine 17 is a tRNA binding site. Histidine 22 serves as the catalytic Proton acceptor. 3 residues coordinate tRNA: tyrosine 68, asparagine 70, and asparagine 116.

Belongs to the PTH family. Monomer.

Its subcellular location is the cytoplasm. The catalysed reaction is an N-acyl-L-alpha-aminoacyl-tRNA + H2O = an N-acyl-L-amino acid + a tRNA + H(+). Its function is as follows. Hydrolyzes ribosome-free peptidyl-tRNAs (with 1 or more amino acids incorporated), which drop off the ribosome during protein synthesis, or as a result of ribosome stalling. In terms of biological role, catalyzes the release of premature peptidyl moieties from peptidyl-tRNA molecules trapped in stalled 50S ribosomal subunits, and thus maintains levels of free tRNAs and 50S ribosomes. This is Peptidyl-tRNA hydrolase from Mycobacterium marinum (strain ATCC BAA-535 / M).